The following is a 215-amino-acid chain: Kunitz trypsin inhibitor 4 (215 aa).

A signal peptide spans Met1 to Gly28. Intrachain disulfides connect Cys66–Cys112 and Cys165–Cys176. The N-linked (GlcNAc...) asparagine glycan is linked to Asn206.

This sequence belongs to the protease inhibitor I3 (leguminous Kunitz-type inhibitor) family. As to expression, expressed in roots.

The protein localises to the endoplasmic reticulum. Exhibits Kunitz trypsin protease inhibitor activity. Involved in modulating programmed cell death (PCD) in plant-pathogen interactions. Can inhibit both serine proteases and cysteine proteases. May be involved in the modulation of the proteases that participate in the hydrolysis of dietary proteins in the gut of spider mites. This is Kunitz trypsin inhibitor 4 from Arabidopsis thaliana (Mouse-ear cress).